Reading from the N-terminus, the 422-residue chain is 5-hydroxytryptamine receptor 1A (422 aa).

The Extracellular portion of the chain corresponds to 1-38; sequence MDVFSFGQGNNTTASQEPFGTGGNVTSISDVTFSYQVI. N-linked (GlcNAc...) asparagine glycans are attached at residues N10, N11, and N24. The chain crosses the membrane as a helical span at residues 39 to 59; the sequence is TSLLLGTLIFCAVLGNACVVA. The Cytoplasmic segment spans residues 60–73; the sequence is AIALERSLQNVANY. The chain crosses the membrane as a helical span at residues 74–98; that stretch reads LIGSLAVTDLMVSVLVLPMAALYQV. The Extracellular portion of the chain corresponds to 99–107; that stretch reads LNKWTLGQV. A helical transmembrane segment spans residues 108–132; that stretch reads TCDLFIALDVLCCTSSILHLCAIAL. The cysteines at positions 109 and 187 are disulfide-linked. Serotonin is bound by residues D116 and C120. The DRY motif; important for ligand-induced conformation changes signature appears at 133–135; it reads DRY. Topologically, residues 133-152 are cytoplasmic; the sequence is DRYWAITDPIDYVNKRTPRR. Residues 153-174 traverse the membrane as a helical segment; it reads AAALISLTWLIGFLISIPPMLG. Residues 175 to 193 are Extracellular-facing; the sequence is WRTPEDRSDPDACTISKDH. The chain crosses the membrane as a helical span at residues 194-216; it reads GYTIYSTFGAFYIPLLLMLVLYG. Topologically, residues 217–346 are cytoplasmic; it reads RIFRAARFRI…LARERKTVKT (130 aa). Positions 235–261 are disordered; sequence KKGAGTSLGTSSAPPPKKSLNGQPGSG. Residues K345, T346, and G352 each contribute to the 1D-myo-inositol 4-phosphate site. Residues 347–370 traverse the membrane as a helical segment; that stretch reads LGIIMGTFILCWLPFFIVALVLPF. The Extracellular segment spans residues 371–378; it reads CESSCHMP. Residues 379–403 traverse the membrane as a helical segment; the sequence is ALLGAIINWLGYSNSLLNPVIYAYF. The NPxxY motif; important for ligand-induced conformation changes and signaling motif lies at 396 to 400; it reads NPVIY. Positions 403, 404, and 405 each coordinate 1D-myo-inositol 4-phosphate. At 404–422 the chain is on the cytoplasmic side; it reads NKDFQNAFKKIIKCKFCRR.

The protein belongs to the G-protein coupled receptor 1 family. 5-hydroxytryptamine receptor subfamily. HTR1A sub-subfamily. As to quaternary structure, heterodimer; heterodimerizes with GPER1. Interacts with YIF1B. Interacts with GPR39 and GALR1. In terms of tissue distribution, detected in hypothalamus, mesencephalon, amygdala, medulla, thalamus, septum and hippocampus.

Its subcellular location is the cell membrane. The protein localises to the cell projection. It is found in the dendrite. G-protein coupled receptor activity is regulated by lipids: phosphatidylinositol 4-phosphate increases HTR1A-mediated activity. Functionally, G-protein coupled receptor for 5-hydroxytryptamine (serotonin). Also functions as a receptor for various drugs and psychoactive substances. Ligand binding causes a conformation change that triggers signaling via guanine nucleotide-binding proteins (G proteins) and modulates the activity of downstream effectors, such as adenylate cyclase. HTR1A is coupled to G(i)/G(o) G alpha proteins and mediates inhibitory neurotransmission: signaling inhibits adenylate cyclase activity and activates a phosphatidylinositol-calcium second messenger system that regulates the release of Ca(2+) ions from intracellular stores. Beta-arrestin family members regulate signaling by mediating both receptor desensitization and resensitization processes. This Rattus norvegicus (Rat) protein is 5-hydroxytryptamine receptor 1A.